The chain runs to 491 residues: Iota-carrageenase (491 aa).

Positions 1–19 are cleaved as a signal peptide; it reads MKLQFKPVYLASIAIMAIG. Cys422 and Cys490 are disulfide-bonded.

Belongs to the glycosyl hydrolase 82 family.

The protein resides in the secreted. It catalyses the reaction Endohydrolysis of 1,4-beta-D-linkages between D-galactose 4-sulfate and 3,6-anhydro-D-galactose-2-sulfate in iota-carrageenans.. Hydrolyzes iota-carrageenans, sulfated 1,3-alpha-1,4-beta galactans from red algal cell walls, with an inversion of anomeric configuration. Also active against hybrid iota-/nu-carrageenan, not active against kappa- or lambda-carrageenans. This chain is Iota-carrageenase, found in Zobellia galactanivorans (strain DSM 12802 / CCUG 47099 / CIP 106680 / NCIMB 13871 / Dsij).